Reading from the N-terminus, the 888-residue chain is Alanine--tRNA ligase (888 aa).

Positions 564, 568, 676, and 680 each coordinate Zn(2+).

This sequence belongs to the class-II aminoacyl-tRNA synthetase family. Zn(2+) is required as a cofactor.

It is found in the cytoplasm. It carries out the reaction tRNA(Ala) + L-alanine + ATP = L-alanyl-tRNA(Ala) + AMP + diphosphate. Its function is as follows. Catalyzes the attachment of alanine to tRNA(Ala) in a two-step reaction: alanine is first activated by ATP to form Ala-AMP and then transferred to the acceptor end of tRNA(Ala). Also edits incorrectly charged Ser-tRNA(Ala) and Gly-tRNA(Ala) via its editing domain. This chain is Alanine--tRNA ligase, found in Bartonella tribocorum (strain CIP 105476 / IBS 506).